Consider the following 430-residue polypeptide: Enolase (430 aa).

A (2R)-2-phosphoglycerate-binding site is contributed by Gln165. Glu207 functions as the Proton donor in the catalytic mechanism. The Mg(2+) site is built by Asp244, Glu287, and Asp314. Residues Lys339, Arg368, Ser369, and Lys390 each coordinate (2R)-2-phosphoglycerate. Residue Lys339 is the Proton acceptor of the active site.

The protein belongs to the enolase family. As to quaternary structure, component of the RNA degradosome, a multiprotein complex involved in RNA processing and mRNA degradation. Requires Mg(2+) as cofactor.

It localises to the cytoplasm. The protein localises to the secreted. Its subcellular location is the cell surface. It catalyses the reaction (2R)-2-phosphoglycerate = phosphoenolpyruvate + H2O. It functions in the pathway carbohydrate degradation; glycolysis; pyruvate from D-glyceraldehyde 3-phosphate: step 4/5. Catalyzes the reversible conversion of 2-phosphoglycerate (2-PG) into phosphoenolpyruvate (PEP). It is essential for the degradation of carbohydrates via glycolysis. This Xanthomonas oryzae pv. oryzae (strain MAFF 311018) protein is Enolase.